We begin with the raw amino-acid sequence, 600 residues long: CoA ligase FVEG_12633 (600 aa).

Residues 170–174, histidine 214, 321–323, and 342–343 contribute to the ATP site; these read TSGTT, AAL, and ER. An SBD1 region spans residues 241–342; sequence NSVWTRLAAP…QLTGGNVLLE (102 aa). Residues 343–420 are SBD2; the sequence is RYGMTEVGMA…LRGPTVFTGY (78 aa). Methionine 346 contributes to the substrate binding site. The ATP site is built by threonine 347, aspartate 441, arginine 471, and lysine 564. Position 564 (lysine 564) interacts with oxalate.

It belongs to the ATP-dependent AMP-binding enzyme family.

In terms of biological role, coA ligase; part of the Fusarium detoxification of benzoxazolinone cluster 2 (FDB2) involved in the degradation of benzoxazolinones produced by the host plant. Maize, wheat, and rye produce the 2 benzoxazinone phytoanticipins 2,4-dihy-droxy-7-methoxy-1,4-benzoxazin-3-one (DIMBOA) and 2,4-dihydroxy-1,4-benzoxazin-3-one (DIBOA) that, due to their inherent instability once released, spontaneously degrade to the more stable corresponding benzoxazolinones, 6-methoxy-2-benzoxazolinone (MBOA) and 2-benzoxazolinone (BOA), respectively. The first step in the detoxification of benzoxazolinones involves the hydrolysis of the cyclic ester bond of benzoxazolinones by the FDB1 cluster gamma-lactamase MBL1 to aminophenols. MBL1 is able to convert BOA into 2-aminophenol (2-AP), as well as MBOA into 5-methoxy-2-aminophenol (2-AMP). The FDB2 cluster N-malonyltransferase FDB2/NAT1 then metabolizes aminophenols via N-malonylation to non-toxic malonamic acids. FDB2/NAT1 converts 2-AP into N-(2-hydroxyphenyl) malonamic acid (HPMA) and 2-AMP into N-(2-hydroxy-4-methoxyphenyl) malonamic acid (HMPMA). The duplicated dienlactone hydrolases DLH1 and DLH2 may provide redundant function for hydrolyzing the lactone moiety in the BOA molecule. The roles of the amidases an other enzymes encoded by the 2 FDB clusters have not been identified so far. This Gibberella moniliformis (strain M3125 / FGSC 7600) (Maize ear and stalk rot fungus) protein is CoA ligase FVEG_12633.